The chain runs to 437 residues: 2-methylisoborneol synthase (437 aa).

The interval 32–125 (AHDSEATVGG…IPGLYHHPVP (94 aa)) is disordered. The span at 59 to 73 (PPSPAAPPTDVPAPE) shows a compositional bias: pro residues. The Mg(2+) site is built by aspartate 194, aspartate 195, glutamate 199, asparagine 342, serine 346, and glutamate 350.

Belongs to the terpene synthase family. 2-methylisoborneol synthase subfamily. Mg(2+) serves as cofactor.

It carries out the reaction (E)-2-methylgeranyl diphosphate + H2O = 2-methylisoborneol + diphosphate. Functionally, catalyzes the cyclization of 2-methylgeranyl diphosphate (2-MeGPP) to 2-methylisoborneol (2-MIB), which likely involves the intermediacy of 2-methyllinalyl diphosphate. This chain is 2-methylisoborneol synthase, found in Streptomyces griseus.